Here is a 511-residue protein sequence, read N- to C-terminus: Maturase K (511 aa).

It belongs to the intron maturase 2 family. MatK subfamily.

The protein resides in the plastid. It localises to the chloroplast. Its function is as follows. Usually encoded in the trnK tRNA gene intron. Probably assists in splicing its own and other chloroplast group II introns. This is Maturase K from Anchomanes difformis (Amorphophallus difformis).